The primary structure comprises 226 residues: MIHIAIAEDDFRVAQIHERLIKQLDGFKIIGKAANAKETLALLKEHKADLLLLDIYMPDELGTALIPDIRSRFPEVDIMIITAATETRHLQEALRAGIAHYLIKPVTADKFRQVLLQYKEKRKLLMSQPEVSQSMIDHIFGNGVKTALPAEDLPTGINSITLRKIKEALQTASEGLTAEELGEKMGASRTTARRYAEYLVSKEEARAELEYGIIGRPERKYYLAAD.

One can recognise a Response regulatory domain in the interval 3 to 119 (HIAIAEDDFR…KFRQVLLQYK (117 aa)). 4-aspartylphosphate is present on Asp54. The segment at residues 178-197 (AEELGEKMGASRTTARRYAE) is a DNA-binding region (H-T-H motif).

In terms of processing, phosphorylated by CitS.

It is found in the cytoplasm. Its function is as follows. Member of the two-component regulatory system CitT/CitS. Regulates the expression of the citM-yflN operon. Phosphorylated CitT binds to the citM promoter to activate the transcription of the citM-yflN operon. The sequence is that of Transcriptional regulatory protein CitT (citT) from Bacillus subtilis (strain 168).